We begin with the raw amino-acid sequence, 324 residues long: Probable UDP-sugar transporter protein SLC35A4 (324 aa).

Residues Met-1–Arg-18 lie on the Cytoplasmic side of the membrane. Residues Trp-19–Leu-39 form a helical membrane-spanning segment. Residues Cys-40–Ser-52 are Lumenal-facing. Residues Ala-53–Trp-73 form a helical membrane-spanning segment. Residues Gln-74–Gln-85 lie on the Cytoplasmic side of the membrane. Residues Ala-86–Leu-106 form a helical membrane-spanning segment. Residues Gln-107–Gln-142 are Lumenal-facing. Residues Gly-143–Val-163 traverse the membrane as a helical segment. The Cytoplasmic segment spans residues Pro-164–Met-180. A helical transmembrane segment spans residues Pro-181 to Leu-201. Topologically, residues Ser-202–Gln-214 are lumenal. A helical membrane pass occupies residues Leu-215–Leu-235. Residues His-236 to Ser-250 are Cytoplasmic-facing. The helical transmembrane segment at Gly-251 to Met-271 threads the bilayer. At Lys-272 to Ser-275 the chain is on the lumenal side. Residues Ser-276–Leu-298 form a helical membrane-spanning segment. Topologically, residues Arg-299–Arg-324 are cytoplasmic.

It belongs to the nucleotide-sugar transporter family. SLC35A subfamily. As to quaternary structure, found in a complex with SLC35A2 and SLC35A3.

Its subcellular location is the golgi apparatus membrane. It catalyses the reaction CDP-L-ribitol(in) + CDP(out) = CDP-L-ribitol(out) + CDP(in). Its function is as follows. Mediates the transport of CDP-ribitol. Does not exhibit CMP-sialic acid, UDP-galactose and UDP-N-acetylglucosamine transport activity. The sequence is that of Probable UDP-sugar transporter protein SLC35A4 from Pongo abelii (Sumatran orangutan).